Here is a 320-residue protein sequence, read N- to C-terminus: Cytochrome c biogenesis protein CcsA (320 aa).

The next 8 membrane-spanning stretches (helical) occupy residues 9–29 (ILIH…FLTL), 44–64 (GMIV…IYSG), 71–91 (LYES…VCYF), 99–119 (LNAI…SGLL), 144–164 (MVLG…LLVI), 226–246 (IISL…VWAN), 261–281 (WAFI…NINL), and 287–307 (AIVA…VNLL).

The protein belongs to the CcmF/CycK/Ccl1/NrfE/CcsA family. May interact with Ccs1.

It is found in the plastid. The protein localises to the chloroplast thylakoid membrane. Its function is as follows. Required during biogenesis of c-type cytochromes (cytochrome c6 and cytochrome f) at the step of heme attachment. The sequence is that of Cytochrome c biogenesis protein CcsA from Carica papaya (Papaya).